The following is a 456-amino-acid chain: Sensitive to high expression protein 9, mitochondrial (456 aa).

Residues 1 to 30 constitute a mitochondrion transit peptide; sequence MLRYYGATRNLPLVFSINKLMLRASSFTRP. At 31–296 the chain is on the mitochondrial matrix side; that stretch reads FHYSSYSLQN…WSDKIRRTST (266 aa). Coiled-coil stretches lie at residues 71 to 128 and 178 to 277; these read QHLK…KDEL and IQKL…YRAI. A helical membrane pass occupies residues 297–317; the sequence is WGTFILMGMNIFLFIVLQLLL. The Mitochondrial intermembrane segment spans residues 318–435; it reads EPWKRKRLVG…KLDAPLVFDT (118 aa). A helical membrane pass occupies residues 436-456; the sequence is LEFYLYSISLVSMTILVSGLI.

The protein belongs to the SHE9 family. As to quaternary structure, homooligomer. Participates in a complex of about 300 kDa.

The protein localises to the mitochondrion inner membrane. In terms of biological role, required for the maintenance of the structure of the mitochondrial inner membrane. Involved in mitochondrial morphology. Causes growth arrest when highly overexpressed. This chain is Sensitive to high expression protein 9, mitochondrial (SHE9), found in Saccharomyces cerevisiae (strain ATCC 204508 / S288c) (Baker's yeast).